The following is a 185-amino-acid chain: Adenine phosphoribosyltransferase (185 aa).

This sequence belongs to the purine/pyrimidine phosphoribosyltransferase family. In terms of assembly, homodimer.

It localises to the cytoplasm. It carries out the reaction AMP + diphosphate = 5-phospho-alpha-D-ribose 1-diphosphate + adenine. Its pathway is purine metabolism; AMP biosynthesis via salvage pathway; AMP from adenine: step 1/1. Functionally, catalyzes a salvage reaction resulting in the formation of AMP, that is energically less costly than de novo synthesis. This Pectobacterium atrosepticum (strain SCRI 1043 / ATCC BAA-672) (Erwinia carotovora subsp. atroseptica) protein is Adenine phosphoribosyltransferase.